We begin with the raw amino-acid sequence, 232 residues long: Lipoprotein-releasing system ATP-binding protein LolD (232 aa).

The region spanning 11–232 (IEVTDLQRAF…LHDGRLIEEY (222 aa)) is the ABC transporter domain. ATP is bound at residue 47–54 (GPSGAGKS).

The protein belongs to the ABC transporter superfamily. Lipoprotein translocase (TC 3.A.1.125) family. The complex is composed of two ATP-binding proteins (LolD) and two transmembrane proteins (LolC and LolE).

Its subcellular location is the cell inner membrane. In terms of biological role, part of the ABC transporter complex LolCDE involved in the translocation of mature outer membrane-directed lipoproteins, from the inner membrane to the periplasmic chaperone, LolA. Responsible for the formation of the LolA-lipoprotein complex in an ATP-dependent manner. The polypeptide is Lipoprotein-releasing system ATP-binding protein LolD (Zymomonas mobilis subsp. mobilis (strain ATCC 31821 / ZM4 / CP4)).